Here is a 412-residue protein sequence, read N- to C-terminus: STAGA complex 65 subunit gamma (412 aa).

The disordered stretch occupies residues alanine 81 to proline 107. Serine 106 is subject to Phosphoserine. Lysine 269 participates in a covalent cross-link: Glycyl lysine isopeptide (Lys-Gly) (interchain with G-Cter in SUMO2). Phosphoserine is present on residues serine 321 and serine 332. Residues glutamate 364–isoleucine 412 form a disordered region. Positions serine 384–serine 393 are enriched in low complexity.

In terms of assembly, component of the STAGA transcription coactivator-HAT complex, at least composed of SUPT3H, SUPT7L, GCN5L2, TAF5L, TAF6L, TADA3L, TAD1L, TAF10, TAF12 and TAF9. Post-translationally, sumoylated.

The protein resides in the nucleus. In Mus musculus (Mouse), this protein is STAGA complex 65 subunit gamma (Supt7l).